The primary structure comprises 447 residues: Protein king tubby (447 aa).

A disordered region spans residues 54–84; the sequence is GSPQNPDQILSNNSSSITMNSSRNNSNNMRS. Over residues 62-84 the composition is skewed to low complexity; sequence ILSNNSSSITMNSSRNNSNNMRS. Residue Ser-136 is modified to Phosphoserine. Low complexity predominate over residues 168–182; the sequence is EGAAMEGSNGAANGS. Residues 168 to 191 form a disordered region; it reads EGAAMEGSNGAANGSGSVGGSGES.

It belongs to the TUB family.

Its subcellular location is the cytoplasm. It is found in the nucleus. It localises to the cell projection. The protein localises to the cilium membrane. The protein resides in the rhabdomere. This chain is Protein king tubby, found in Drosophila grimshawi (Hawaiian fruit fly).